The primary structure comprises 464 residues: ATP-dependent protease ATPase subunit HslU (464 aa).

Residues V18, 60 to 65 (GVGKTE), D277, E342, and R414 each bind ATP.

This sequence belongs to the ClpX chaperone family. HslU subfamily. As to quaternary structure, a double ring-shaped homohexamer of HslV is capped on each side by a ring-shaped HslU homohexamer. The assembly of the HslU/HslV complex is dependent on binding of ATP.

Its subcellular location is the cytoplasm. ATPase subunit of a proteasome-like degradation complex; this subunit has chaperone activity. The binding of ATP and its subsequent hydrolysis by HslU are essential for unfolding of protein substrates subsequently hydrolyzed by HslV. HslU recognizes the N-terminal part of its protein substrates and unfolds these before they are guided to HslV for hydrolysis. The protein is ATP-dependent protease ATPase subunit HslU of Lactobacillus delbrueckii subsp. bulgaricus (strain ATCC BAA-365 / Lb-18).